The chain runs to 336 residues: MKRIAVLTSGGDAPGMNAAIRAVVRKAISEGMEVYGIYDGYAGMVAGEIYPLDATSVGDIISRGGTFLHSARYPEFAQVEGQLKGIEQLKKHGIEGVVVIGGDGSYHGAMRLTEHGFPAVGVPGTIDNDIVGTDFTIGFDTAVTTAMDAIDKIRDTSSSHRRTFVIEVMGRNAGDIALWAGIASGADEIIVPEEGFKIEEVVESIKNGYAKGKKHNIIVLAEGVMSADEFAEKLKEAGDMSDLRVTELGHIQRGGSPTARDRVLASRMGAHAVKLLKEGIGGVAVGIRNEQMVESPILGTAEEGALFSLTAEGKIVVNNPHKADLDLADLNRSINI.

Gly-11 lines the ATP pocket. Arg-21–Arg-25 contributes to the ADP binding site. Residues Arg-72 to Tyr-73 and Gly-102 to Ser-105 each bind ATP. Residue Asp-103 coordinates Mg(2+). Thr-125–Asp-127 lines the substrate pocket. Asp-127 (proton acceptor) is an active-site residue. Residue Arg-154 coordinates ADP. Substrate is bound by residues Arg-162 and Met-169–Arg-171. Residues Gly-185–Asp-187, Lys-211, and Lys-213–His-215 contribute to the ADP site. Substrate is bound by residues Glu-222, Arg-244, and His-250–Arg-253.

It belongs to the phosphofructokinase type A (PFKA) family. ATP-dependent PFK group I subfamily. Prokaryotic clade 'B1' sub-subfamily. In terms of assembly, homotetramer. Requires Mg(2+) as cofactor.

It localises to the cytoplasm. It carries out the reaction beta-D-fructose 6-phosphate + ATP = beta-D-fructose 1,6-bisphosphate + ADP + H(+). It participates in carbohydrate degradation; glycolysis; D-glyceraldehyde 3-phosphate and glycerone phosphate from D-glucose: step 3/4. Allosterically activated by ADP and other diphosphonucleosides, and allosterically inhibited by phosphoenolpyruvate. Catalyzes the phosphorylation of D-fructose 6-phosphate to fructose 1,6-bisphosphate by ATP, the first committing step of glycolysis. This chain is ATP-dependent 6-phosphofructokinase, found in Streptococcus sanguinis (strain SK36).